A 327-amino-acid chain; its full sequence is Mitochondrial coenzyme A transporter SLC25A42 (327 aa).

3 Solcar repeats span residues 34–120 (KSIL…YKKL), 132–217 (LTPI…LKKL), and 227–315 (PYPF…TQIL). Transmembrane regions (helical) follow at residues 36 to 56 (ILNS…AVAP), 92 to 112 (LWRG…IQFC), 138 to 158 (LLAG…LDLV), 189 to 209 (LYRG…ISFF), 233 to 253 (LLFG…LDVV), and 296 to 316 (VKGP…QILL).

The protein belongs to the mitochondrial carrier (TC 2.A.29) family.

The protein resides in the mitochondrion inner membrane. It catalyses the reaction ADP(out) + CoA(in) = ADP(in) + CoA(out). The enzyme catalyses 3'-dephospho-CoA(in) + ADP(out) = 3'-dephospho-CoA(out) + ADP(in). The catalysed reaction is adenosine 3',5'-bisphosphate(in) + ADP(out) = adenosine 3',5'-bisphosphate(out) + ADP(in). It carries out the reaction AMP(in) + ADP(out) = AMP(out) + ADP(in). It catalyses the reaction dADP(in) + ADP(out) = dADP(out) + ADP(in). The enzyme catalyses ADP(in) + ATP(out) = ADP(out) + ATP(in). Mitochondrial carrier mediating the transport of coenzyme A (CoA) in mitochondria in exchange for intramitochondrial (deoxy)adenine nucleotides and adenosine 3',5'-diphosphate. In Xenopus tropicalis (Western clawed frog), this protein is Mitochondrial coenzyme A transporter SLC25A42 (slc25a42).